The following is a 269-amino-acid chain: Formamidopyrimidine-DNA glycosylase (269 aa).

The Schiff-base intermediate with DNA role is filled by Pro2. Residue Glu3 is the Proton donor of the active site. Residue Lys57 is the Proton donor; for beta-elimination activity of the active site. 3 residues coordinate DNA: His90, Arg109, and Lys150. The FPG-type zinc-finger motif lies at Arg235–Val269. The active-site Proton donor; for delta-elimination activity is the Arg259.

This sequence belongs to the FPG family. As to quaternary structure, monomer. The cofactor is Zn(2+).

It carries out the reaction Hydrolysis of DNA containing ring-opened 7-methylguanine residues, releasing 2,6-diamino-4-hydroxy-5-(N-methyl)formamidopyrimidine.. The enzyme catalyses 2'-deoxyribonucleotide-(2'-deoxyribose 5'-phosphate)-2'-deoxyribonucleotide-DNA = a 3'-end 2'-deoxyribonucleotide-(2,3-dehydro-2,3-deoxyribose 5'-phosphate)-DNA + a 5'-end 5'-phospho-2'-deoxyribonucleoside-DNA + H(+). In terms of biological role, involved in base excision repair of DNA damaged by oxidation or by mutagenic agents. Acts as a DNA glycosylase that recognizes and removes damaged bases. Has a preference for oxidized purines, such as 7,8-dihydro-8-oxoguanine (8-oxoG). Has AP (apurinic/apyrimidinic) lyase activity and introduces nicks in the DNA strand. Cleaves the DNA backbone by beta-delta elimination to generate a single-strand break at the site of the removed base with both 3'- and 5'-phosphates. The protein is Formamidopyrimidine-DNA glycosylase of Pectobacterium atrosepticum (strain SCRI 1043 / ATCC BAA-672) (Erwinia carotovora subsp. atroseptica).